Here is a 202-residue protein sequence, read N- to C-terminus: Probable cobalt-precorrin-6B C(15)-methyltransferase (decarboxylating) (202 aa).

S-adenosyl-L-methionine-binding positions include T29, 53-57 (GCGSG), D77, and V106.

It belongs to the methyltransferase superfamily. Archaeal-type CbiT family.

It carries out the reaction Co-precorrin-6B + S-adenosyl-L-methionine = Co-precorrin-7 + S-adenosyl-L-homocysteine + CO2. The protein operates within cofactor biosynthesis; adenosylcobalamin biosynthesis; cob(II)yrinate a,c-diamide from sirohydrochlorin (anaerobic route): step 8/10. In terms of biological role, catalyzes the methylation of C-15 in cobalt-precorrin-6B followed by the decarboxylation of C-12 to form cobalt-precorrin-7. The polypeptide is Probable cobalt-precorrin-6B C(15)-methyltransferase (decarboxylating) (Thermoplasma acidophilum (strain ATCC 25905 / DSM 1728 / JCM 9062 / NBRC 15155 / AMRC-C165)).